The primary structure comprises 146 residues: Hemoglobin subunit beta (146 aa).

One can recognise a Globin domain in the interval 2 to 146; the sequence is QWSDSERTII…VVMFLGKQYH (145 aa). 2 residues coordinate heme b: His63 and His92.

Belongs to the globin family. As to quaternary structure, heterotetramer of two alpha chains and two beta chains. In terms of tissue distribution, red blood cells.

Involved in oxygen transport from the lung to the various peripheral tissues. This chain is Hemoglobin subunit beta (hbb), found in Artedidraco orianae (Barbeled plunderfish).